The following is a 114-amino-acid chain: Fumarate reductase subunit D (114 aa).

Transmembrane regions (helical) follow at residues 27-47 (ICFPVLILILGILLPLGLIPM), 50-70 (IIVFAHTWLGKLVILAVTIFP), and 94-114 (WLFYGLSTLYSIVVLFAVIAL).

The protein belongs to the FrdD family. Part of an enzyme complex containing four subunits: a flavoprotein (FrdA), an iron-sulfur protein (FrdB), and two hydrophobic anchor proteins (FrdC and FrdD).

The protein resides in the cell inner membrane. Functionally, anchors the catalytic components of the fumarate reductase complex to the cell membrane, binds quinones. The chain is Fumarate reductase subunit D from Haemophilus ducreyi (strain 35000HP / ATCC 700724).